A 247-amino-acid chain; its full sequence is tRNA (guanine-N(1)-)-methyltransferase (247 aa).

S-adenosyl-L-methionine contacts are provided by residues glycine 115 and 135-140 (IGDYVL).

It belongs to the RNA methyltransferase TrmD family. As to quaternary structure, homodimer.

It localises to the cytoplasm. It carries out the reaction guanosine(37) in tRNA + S-adenosyl-L-methionine = N(1)-methylguanosine(37) in tRNA + S-adenosyl-L-homocysteine + H(+). Its function is as follows. Specifically methylates guanosine-37 in various tRNAs. The protein is tRNA (guanine-N(1)-)-methyltransferase of Alkaliphilus metalliredigens (strain QYMF).